The primary structure comprises 390 residues: Protein NDRG4-A (390 aa).

The disordered stretch occupies residues 356-390 (LTSASSVDGSRPRPCTQSESSDGIGQINHTMEVSC). Over residues 370 to 390 (CTQSESSDGIGQINHTMEVSC) the composition is skewed to polar residues.

The protein belongs to the NDRG family.

The protein resides in the cytoplasm. It localises to the cytosol. Functionally, contributes to the maintenance of intracerebral BDNF levels within the normal range. May enhance growth factor-induced ERK1 and ERK2 phosphorylation. May attenuate growth factor-promoted ELK1 phosphorylation in a microtubule-dependent manner. This Xenopus laevis (African clawed frog) protein is Protein NDRG4-A (ndrg4-a).